A 113-amino-acid chain; its full sequence is Insulin-like peptide 02 (113 aa).

Positions 1–22 (MFYLTFLLFGAICIGQIQLGQP) are cleaved as a signal peptide. Residues 23 to 42 (VKFKVNEDGHRPSVYPIKYR) constitute a propeptide that is removed on maturation. Disulfide bonds link Cys44–Cys99, Cys56–Cys112, and Cys98–Cys103. Positions 62–87 (RRKRSIEADIITDKDTANSYFNRVKR) are cleaved as a propeptide — c peptide.

It belongs to the insulin family.

It is found in the secreted. Insulin decreases blood glucose concentration. May have evolved to activate insulin receptors (INSR) in vertebrates. Molecular docking studies reveals unique interaction with the human insulin receptor. In vivo, insulin-like peptide injection reduces blood glucose levels in two models of zebrafish diabetes (streptozotocin- and glucose-induced). Also shorter swimming distance of zebrafish larvae, an effect which is not observed with human insulin. In Exaiptasia diaphana (Tropical sea anemone), this protein is Insulin-like peptide 02.